Here is a 382-residue protein sequence, read N- to C-terminus: MSALKRMMRVSNRSLIAFIFFFSLSTSCLYFIYVAPGIANTYLFMVQARGIMLRENVKTIGHMIRLYTNKNTTLNGTDYPEGNNTSDYLVQTTTYLPQNFTYSPHLPCPEKLPYMRGFLSVNVSEISFDEVHQLFSKDSEIEPGGHWRPQDCKPRWKVAVLIPFRNRHEHLPIFFLHLIPMLQKQRLEFAFYVIEQTGTQPFNRAMLFNVGFKEAMKDRAWDCVIFHDVDHLPENDRNYYGCGEMPRHFAAKLDKYMYILPYKEFFGGVSGLTVEQFRKINGFPNAFWGWGGEDDDLWNRVHYSGYNVTRPEGDLGKYTSIPHHHRGEVQFLGRYKLLRYSKERQFIDGLNNLLYTPKILVDRLYTNISVNLMPELAPVEDY.

The Cytoplasmic segment spans residues Met1–Leu15. The chain crosses the membrane as a helical; Signal-anchor for type II membrane protein span at residues Ile16–Ala35. The Lumenal portion of the chain corresponds to Pro36–Tyr382. Asn71, Asn75, Asn83, Asn84, Asn99, and Asn122 each carry an N-linked (GlcNAc...) asparagine glycan. The cysteines at positions 108 and 152 are disulfide-linked. Residues Pro163–Arg167, Phe202–Arg204, Val229–Asp230, Tyr258, and Trp290 each bind UDP-alpha-D-galactose. A disulfide bridge links Cys223 with Cys242. Asp230 is a Mn(2+) binding site. An N-acetyl-D-glucosamine-binding site is contributed by Gly292–Asp295. Asn307 carries N-linked (GlcNAc...) asparagine glycosylation. Residue His323 coordinates Mn(2+). His323–His324 contributes to the UDP-alpha-D-galactose binding site. Arg334 is an N-acetyl-D-glucosamine binding site. Residue Asn367 is glycosylated (N-linked (GlcNAc...) asparagine).

It belongs to the glycosyltransferase 7 family. It depends on Mn(2+) as a cofactor. The cofactor is Mg(2+). Ca(2+) serves as cofactor. Highest expression in brain with lower levels found in lungs, heart, skeletal muscle and kidney. Lowest expression in testis, liver and spleen.

The protein localises to the golgi apparatus. It is found in the golgi stack membrane. The catalysed reaction is a beta-D-glucosyl-(1&lt;-&gt;1')-N-acylsphing-4-enine + UDP-alpha-D-galactose = a beta-D-Gal-(1-&gt;4)-beta-D-Glc-(1&lt;-&gt;1)-Cer(d18:1(4E)) + UDP + H(+). It participates in protein modification; protein glycosylation. Its pathway is sphingolipid metabolism. Its activity is regulated as follows. Inhibited by EDTA. Its function is as follows. Catalyzes the synthesis of lactosylceramide (LacCer) via the transfer of galactose from UDP-galactose to glucosylceramide (GlcCer). LacCer is the starting point in the biosynthesis of all gangliosides (membrane-bound glycosphingolipids) which play pivotal roles in the CNS including neuronal maturation and axonal and myelin formation. In Rattus norvegicus (Rat), this protein is Beta-1,4-galactosyltransferase 6.